We begin with the raw amino-acid sequence, 314 residues long: tRNA dimethylallyltransferase (314 aa).

11–18 is an ATP binding site; it reads GPTASGKT. 13 to 18 is a substrate binding site; that stretch reads TASGKT. 4 interaction with substrate tRNA regions span residues 36 to 39, 160 to 164, 241 to 246, and 274 to 281; these read DSAL, QRINR, RCVGYR, and KRQITWLR.

The protein belongs to the IPP transferase family. As to quaternary structure, monomer. Mg(2+) serves as cofactor.

The enzyme catalyses adenosine(37) in tRNA + dimethylallyl diphosphate = N(6)-dimethylallyladenosine(37) in tRNA + diphosphate. Functionally, catalyzes the transfer of a dimethylallyl group onto the adenine at position 37 in tRNAs that read codons beginning with uridine, leading to the formation of N6-(dimethylallyl)adenosine (i(6)A). The polypeptide is tRNA dimethylallyltransferase (Glaesserella parasuis serovar 5 (strain SH0165) (Haemophilus parasuis)).